Reading from the N-terminus, the 163-residue chain is Nucleotide-binding protein YajQ (163 aa).

Belongs to the YajQ family.

Its function is as follows. Nucleotide-binding protein. This chain is Nucleotide-binding protein YajQ, found in Salmonella agona (strain SL483).